The sequence spans 131 residues: Small ribosomal subunit protein uS8 (131 aa).

Belongs to the universal ribosomal protein uS8 family. As to quaternary structure, part of the 30S ribosomal subunit. Contacts proteins S5 and S12.

Its function is as follows. One of the primary rRNA binding proteins, it binds directly to 16S rRNA central domain where it helps coordinate assembly of the platform of the 30S subunit. The protein is Small ribosomal subunit protein uS8 of Ralstonia nicotianae (strain ATCC BAA-1114 / GMI1000) (Ralstonia solanacearum).